We begin with the raw amino-acid sequence, 443 residues long: C4-dicarboxylate transport protein (443 aa).

Transmembrane regions (helical) follow at residues 7-26 (SLYVQVIIAIVLGILVGALF), 46-63 (MVIAPIIFATVVSGVAHM), 76-98 (ALIYFEVVSTLALIIGMVVMNVL), 140-162 (LVSAFTGGELLPVLLVALLFGFA), 183-205 (VVFVILGFIMRLAPIGAFGAMAF), 218-240 (LGYLMGSFYLTCLLFIFVVLGLI), and 350-372 (FITLAATLGAVGHVPVAGMALIL). Positions 415 to 443 (GEDLPTTEPDVASEERGEGREIDSSRPVT) are disordered. Positions 427 to 443 (SEERGEGREIDSSRPVT) are enriched in basic and acidic residues.

This sequence belongs to the dicarboxylate/amino acid:cation symporter (DAACS) (TC 2.A.23) family.

The protein localises to the cell membrane. Responsible for the transport of dicarboxylates such as succinate, fumarate, and malate across the membrane. This chain is C4-dicarboxylate transport protein (dctA), found in Deinococcus radiodurans (strain ATCC 13939 / DSM 20539 / JCM 16871 / CCUG 27074 / LMG 4051 / NBRC 15346 / NCIMB 9279 / VKM B-1422 / R1).